The following is a 253-amino-acid chain: Imidazole glycerol phosphate synthase subunit HisF (253 aa).

Catalysis depends on residues aspartate 11 and aspartate 130.

The protein belongs to the HisA/HisF family. Heterodimer of HisH and HisF.

It localises to the cytoplasm. It catalyses the reaction 5-[(5-phospho-1-deoxy-D-ribulos-1-ylimino)methylamino]-1-(5-phospho-beta-D-ribosyl)imidazole-4-carboxamide + L-glutamine = D-erythro-1-(imidazol-4-yl)glycerol 3-phosphate + 5-amino-1-(5-phospho-beta-D-ribosyl)imidazole-4-carboxamide + L-glutamate + H(+). The protein operates within amino-acid biosynthesis; L-histidine biosynthesis; L-histidine from 5-phospho-alpha-D-ribose 1-diphosphate: step 5/9. In terms of biological role, IGPS catalyzes the conversion of PRFAR and glutamine to IGP, AICAR and glutamate. The HisF subunit catalyzes the cyclization activity that produces IGP and AICAR from PRFAR using the ammonia provided by the HisH subunit. The polypeptide is Imidazole glycerol phosphate synthase subunit HisF (Dehalococcoides mccartyi (strain ATCC BAA-2266 / KCTC 15142 / 195) (Dehalococcoides ethenogenes (strain 195))).